A 372-amino-acid chain; its full sequence is uncharacterized protein (372 aa).

The N-terminal stretch at 1 to 24 (MSYYQIIVCILASISYIILLEVIA) is a signal peptide. A PA domain is found at 92 to 215 (PNRNDTDASY…SSYNLLWSDL (124 aa)). A helical transmembrane segment spans residues 236–256 (FWPFLLCFSPSIIMLITVQAL). Ser-280 carries the post-translational modification Phosphoserine. Residues 321–363 (CVICLESFTKGDKVVALPCKHEFHRPCIAKWIVDYRHACPTCN) form an RING-type; atypical zinc finger.

The protein resides in the golgi apparatus membrane. It localises to the vacuole membrane. This is an uncharacterized protein from Schizosaccharomyces pombe (strain 972 / ATCC 24843) (Fission yeast).